The primary structure comprises 234 residues: ATP synthase subunit delta, chloroplastic (234 aa).

The transit peptide at 1 to 47 (MASLQQTLFSLQSKLPPSSFQIARSLPLRKTFPIRINNGGNAAGARM) directs the protein to the chloroplast. An N-acetylserine modification is found at Ser48. A glycan (N-linked (GlcNAc...) asparagine) is linked at Asn66. Thr234 is subject to Phosphothreonine.

It belongs to the ATPase delta chain family. F-type ATPases have 2 components, F(1) - the catalytic core - and F(0) - the membrane proton channel. F(1) has five subunits: alpha(3), beta(3), gamma(1), delta(1), epsilon(1). CF(0) has four main subunits: a(1), b(1), b'(1) and c(10-14). The alpha and beta chains form an alternating ring which encloses part of the gamma chain. F(1) is attached to F(0) by a central stalk formed by the gamma and epsilon chains, while a peripheral stalk is formed by the delta, b and b' chains.

The protein resides in the plastid. It is found in the chloroplast thylakoid membrane. F(1)F(0) ATP synthase produces ATP from ADP in the presence of a proton or sodium gradient. F-type ATPases consist of two structural domains, F(1) containing the extramembraneous catalytic core and F(0) containing the membrane proton channel, linked together by a central stalk and a peripheral stalk. During catalysis, ATP synthesis in the catalytic domain of F(1) is coupled via a rotary mechanism of the central stalk subunits to proton translocation (Potential). Essential for photosynthesis, probably by facilitating electron transport in both photosystems I and II. In terms of biological role, this protein is part of the stalk that links CF(0) to CF(1). It either transmits conformational changes from CF(0) to CF(1) or is implicated in proton conduction. The protein is ATP synthase subunit delta, chloroplastic of Arabidopsis thaliana (Mouse-ear cress).